The chain runs to 267 residues: Kafirin PSK8 (267 aa).

A signal peptide spans 1-19 (TKIFALLALHALLVSGTTA).

It belongs to the zein family.

Its function is as follows. Major seed storage prolamin. The sequence is that of Kafirin PSK8 from Sorghum bicolor (Sorghum).